A 500-amino-acid chain; its full sequence is Perfringolysin O (500 aa).

The first 28 residues, 1–28 (MIRFKKTKLIASIAMALCLFSQPVISFS), serve as a signal peptide directing secretion. 4 consecutive transmembrane segments (beta stranded) span residues 189–202 (KSQI…NAKV), 209–218 (VDFNAVANNE), 287–296 (SKDVQAAFKA), and 304–316 (KNSQ…YENS). Positions 458-468 (ECTGLAWEWWR) match the Conserved undecapeptide motif. Positions 490 to 491 (TL) match the Cholesterol binding motif.

Belongs to the cholesterol-dependent cytolysin family. In terms of assembly, modeling based on cryo-EM shows a homooligomeric pore complex containing 38-44 subunits; when inserted in the host membrane.

It is found in the secreted. The protein resides in the host cell membrane. In terms of biological role, a cholesterol-dependent toxin that causes cytolysis by forming pores in cholesterol-containing host membranes. After binding to target membranes, the protein assembles into a pre-pore complex. A major conformational change leads to insertion in the host membrane and formation of an oligomeric pore complex. Cholesterol is required for binding to host cell membranes, membrane insertion and pore formation; cholesterol binding is mediated by a Thr-Leu pair in the C-terminus. Can be reversibly inactivated by oxidation. The polypeptide is Perfringolysin O (pfo) (Clostridium perfringens (strain 13 / Type A)).